Consider the following 1299-residue polypeptide: Sophorolipid transporter (1299 aa).

Topologically, residues 1-64 (MVDDIQVEKR…FCTPLDVFLE (64 aa)) are cytoplasmic. Residues 65 to 85 (ILALFFAAVHGAALPMFTLVV) traverse the membrane as a helical segment. Positions 65–356 (ILALFFAAVH…IAPNVRFLVK (292 aa)) constitute an ABC transmembrane type-1 1 domain. Residues 86 to 114 (GAIFNTFRDFTSYDLKGNEFQHKVNHLSL) are Extracellular-facing. The chain crosses the membrane as a helical span at residues 115-135 (YFVYIGIGMLGSAFLESFLLV). Topologically, residues 136 to 187 (DRGEVLAGRYRKHYLSAVIRQNIAFYDKLGGGEVSTRIINDTNSIQEAISDK) are cytoplasmic. A helical transmembrane segment spans residues 188 to 208 (LGNVVQGIASFIAATVISFAS). The Extracellular portion of the chain corresponds to 209 to 214 (QWKLAC). Residues 215 to 235 (ILLSAVGFMVITMGTGATFMA) form a helical membrane-spanning segment. Over 236–293 (KYQLRSDAIYSQSGATVAEEALSAVRTTVAFGAQPHLAVKYEKVLDRVVKESKRSSYS) the chain is Cytoplasmic. Residues 294–314 (LGVMLACIWASTFWVYALALW) form a helical membrane-spanning segment. Over 315–326 (QGSREIVSGSAD) the chain is Extracellular. A helical membrane pass occupies residues 327–347 (VGKIIVVITAMLLGSFQLGNI). The Cytoplasmic portion of the chain corresponds to 348–725 (APNVRFLVKG…WGLNRKEWGY (378 aa)). An ABC transporter 1 domain is found at 393 to 638 (IELKNVKFRY…EGPYKALVDA (246 aa)). 428–435 (GASGSGKS) is an ATP binding site. Residues 681-690 (SAGTQTTQPP) show a composition bias toward polar residues. The interval 681 to 703 (SAGTQTTQPPEYQENDIPGVRNP) is disordered. The chain crosses the membrane as a helical span at residues 726–746 (ILIGSLASIILGYCYPAMAII). The 290-residue stretch at 727–1016 (LIGSLASIIL…IFSYAPNMNS (290 aa)) folds into the ABC transmembrane type-1 2 domain. Over 747-769 (TGQTTGSMVLPPSEYGKMRHVVN) the chain is Extracellular. A helical membrane pass occupies residues 770-790 (IMGWWYFFVGCISFMTAFITI). The Cytoplasmic segment spans residues 791-848 (AALSLASDKLVKNIRLALFRQLMRMDIAFFDHKNNTPGALTSILAKEAKMIEGLSGAT). Residues 849 to 869 (LGQIQQSLVTLIGGIVTGIPF) traverse the membrane as a helical segment. Residues 870-874 (NWRIG) lie on the Extracellular side of the membrane. Residues 875–895 (LVATSVVPVMLVCGFVRVWVL) traverse the membrane as a helical segment. The Cytoplasmic segment spans residues 896–954 (TQLSDRAREVYERSGSMASEYTSAVRTVQSLTRELDVVVKYTKTVDSQIFSSRIAIARS). A helical transmembrane segment spans residues 955–975 (ALYYALSEGMTPWVVALVFWW). At 976–987 (GSTVMRRGEASV) the chain is on the extracellular side. The chain crosses the membrane as a helical span at residues 988 to 1008 (AGYMTVFMAIITGSQAAGQIF). Residues 1009 to 1299 (SYAPNMNSAK…LVNLQGLGEI (291 aa)) are Cytoplasmic-facing. The 241-residue stretch at 1053-1293 (IEFRHVNFRY…NGWYAELVNL (241 aa)) folds into the ABC transporter 2 domain. 1088-1095 (GASGCGKS) contacts ATP.

Belongs to the ABC transporter superfamily. ABCB family. Multidrug resistance exporter (TC 3.A.1.201) subfamily.

The protein localises to the cell membrane. In terms of biological role, transports acidic acylated and non-acylated sophorolipids (SLs) into the extracellular space, where they can be lactonized by lactone esterase. This chain is Sophorolipid transporter (mdr), found in Starmerella bombicola (Yeast).